A 134-amino-acid chain; its full sequence is Phosphoribosyl-AMP cyclohydrolase (134 aa).

D93 is a Mg(2+) binding site. C94 is a Zn(2+) binding site. The Mg(2+) site is built by D95 and D97. C112 and C119 together coordinate Zn(2+).

It belongs to the PRA-CH family. As to quaternary structure, homodimer. Mg(2+) is required as a cofactor. Zn(2+) serves as cofactor.

Its subcellular location is the cytoplasm. It carries out the reaction 1-(5-phospho-beta-D-ribosyl)-5'-AMP + H2O = 1-(5-phospho-beta-D-ribosyl)-5-[(5-phospho-beta-D-ribosylamino)methylideneamino]imidazole-4-carboxamide. The protein operates within amino-acid biosynthesis; L-histidine biosynthesis; L-histidine from 5-phospho-alpha-D-ribose 1-diphosphate: step 3/9. Its function is as follows. Catalyzes the hydrolysis of the adenine ring of phosphoribosyl-AMP. This chain is Phosphoribosyl-AMP cyclohydrolase, found in Caulobacter sp. (strain K31).